We begin with the raw amino-acid sequence, 147 residues long: UPF0735 ACT domain-containing protein GK2605 (147 aa).

Residues 69 to 144 (TLFFHLEDRS…FVEKVEIVGS (76 aa)) form the ACT domain.

The protein belongs to the UPF0735 family.

The polypeptide is UPF0735 ACT domain-containing protein GK2605 (Geobacillus kaustophilus (strain HTA426)).